Consider the following 439-residue polypeptide: General transcription factor IIE subunit 1 (439 aa).

N-acetylalanine is present on alanine 2. Positions 14–104 (LKRLAKYVIR…NYRTLVNVVK (91 aa)) constitute an HTH TFE/IIEalpha-type domain. Lysine 67 bears the N6-acetyllysine mark. Positions 129, 132, 154, and 157 each coordinate Zn(2+). A C4-type zinc finger spans residues 129-157 (CPVCSSTFTDLEANQLFDPMTGTFRCTFC). Serine 268 is subject to Phosphoserine. Residues 333–344 (SSAMAGSVGAAA) show a composition bias toward low complexity. The disordered stretch occupies residues 333-392 (SSAMAGSVGAAAPVTTANGSDSESETSESDDDSPPRPAAVAVHKREEDEEEDDEFEEVAD). Acidic residues-rich tracts occupy residues 354 to 364 (SESETSESDDD) and 379 to 392 (EDEE…EVAD).

The protein belongs to the TFIIE alpha subunit family. As to quaternary structure, tetramer of two alpha and two beta chains. Interacts with TAF6/TAFII80. Interacts with ATF7IP. Interacts with SND1. Part of TBP-based Pol II pre-initiation complex (PIC), in which Pol II core assembles with general transcription factors and other specific initiation factors including GTF2E1, GTF2E2, GTF2F1, GTF2F2, TCEA1, ERCC2, ERCC3, GTF2H2, GTF2H3, GTF2H4, GTF2H5, GTF2A1, GTF2A2, GTF2B and TBP; this large multi-subunit PIC complex mediates DNA unwinding and targets Pol II core to the transcription start site where the first phosphodiester bond forms.

It is found in the nucleus. Functionally, recruits TFIIH to the initiation complex and stimulates the RNA polymerase II C-terminal domain kinase and DNA-dependent ATPase activities of TFIIH. Both TFIIH and TFIIE are required for promoter clearance by RNA polymerase. This chain is General transcription factor IIE subunit 1 (GTF2E1), found in Pongo abelii (Sumatran orangutan).